Consider the following 428-residue polypeptide: Histidine--tRNA ligase (428 aa).

It belongs to the class-II aminoacyl-tRNA synthetase family. In terms of assembly, homodimer.

The protein resides in the cytoplasm. It catalyses the reaction tRNA(His) + L-histidine + ATP = L-histidyl-tRNA(His) + AMP + diphosphate + H(+). The chain is Histidine--tRNA ligase from Lactobacillus helveticus (strain DPC 4571).